The following is a 202-amino-acid chain: UPF0102 protein Dde_1093 (202 aa).

It belongs to the UPF0102 family.

This is UPF0102 protein Dde_1093 from Oleidesulfovibrio alaskensis (strain ATCC BAA-1058 / DSM 17464 / G20) (Desulfovibrio alaskensis).